We begin with the raw amino-acid sequence, 282 residues long: MVLVGCHVSIAGSIDRAVGRALDAGCDTFQIFSRNPRGWKVKDLDPGLAGAFRAAVSASGIGPVVDHMPYLPNPASPDAEIYEKSVAALAGELRRCSLLGIPYLVTHLGHHRGAGMEAGQERVVAAINRAFEDAGESDVMLLLENTAGEKNSVGTTVDNLSRIVDGIDAKERVGICFDTCHAFAAGYDLRTAEGVDAVLGEIDDAIDLSRLRVVHLNDCKGDLGSGLDRHEHIGLGRIGEDGFRHILRHPAVRRLPLICETPVDERRSDTGNIAKVRELAGA.

Zn(2+) contacts are provided by His67, His107, Glu144, Asp178, His181, His215, Asp228, His230, and Glu260.

Belongs to the AP endonuclease 2 family. The cofactor is Zn(2+).

It carries out the reaction Endonucleolytic cleavage to 5'-phosphooligonucleotide end-products.. In terms of biological role, endonuclease IV plays a role in DNA repair. It cleaves phosphodiester bonds at apurinic or apyrimidinic (AP) sites, generating a 3'-hydroxyl group and a 5'-terminal sugar phosphate. The chain is Probable endonuclease 4 from Methanoculleus marisnigri (strain ATCC 35101 / DSM 1498 / JR1).